A 389-amino-acid chain; its full sequence is Chalcone synthase 6 (389 aa).

Cys-164 is a catalytic residue.

It belongs to the thiolase-like superfamily. Chalcone/stilbene synthases family.

It carries out the reaction (E)-4-coumaroyl-CoA + 3 malonyl-CoA + 3 H(+) = 2',4,4',6'-tetrahydroxychalcone + 3 CO2 + 4 CoA. Its pathway is secondary metabolite biosynthesis; flavonoid biosynthesis. Functionally, the primary product of this enzyme is 4,2',4',6'-tetrahydroxychalcone (also termed naringenin-chalcone or chalcone) which can under specific conditions spontaneously isomerize into naringenin. In Pisum sativum (Garden pea), this protein is Chalcone synthase 6 (CHS6).